Consider the following 586-residue polypeptide: MPAGGGRWGSFWEQRTRQLQSQVRAKEDKIAELETENAVLLLKLAEYKGKIEKSRSEATRISTLYNKQQRLQRNTRSALSQLDGVIQKLNQDIQAFHSSSRALLRDYQDEYQDRVSAIVTAVQRTRQSAETLLACQAKVVHLEQALQDVSARHQLERQRRKALHNSLVELRGNIRVHCRIRPLLPFDSESDDPVLQSSSISREVAHAVDDETVLVKCDRPGHPLINKTYHFERVYGPAESQSAVFGDVCPLLTSLLDGYNVCVMAYGQTGSGKSYTMLGPHSDDGPVLPLDPQSDLGIIPRAAEELFRLISENPSRSPKVEVSIVEVYNNDIFDLLAKDTVAAVSGVKREVMTAKDGRTEVALLASEAVGSASKLMELVRGGLQLRAKHPTLVHADSSRSHLIITVTLTTAACSDSTADQACSATHPGEQTEAGRAGRSRRTSQGASAPQPVPGDPAGRAEQVQARLQLVDLAGSECIGVSGVTGSALRETACINRSLAALADVLGALSEHRSHIPYRNSRLTHLLQDCLGGDAKLLVILCISPSQRHLAQTLQGLGFGIRARQVQRGPARKRPPSSQMEGKRRPD.

Residues 10 to 94 (SFWEQRTRQL…VIQKLNQDIQ (85 aa)) adopt a coiled-coil conformation. Residues 173-565 (NIRVHCRIRP…LGFGIRARQV (393 aa)) enclose the Kinesin motor domain. 267-274 (GQTGSGKS) provides a ligand contact to ATP. Disordered stretches follow at residues 417-460 (TADQ…AGRA) and 564-586 (QVQR…RRPD).

It belongs to the TRAFAC class myosin-kinesin ATPase superfamily. Kinesin family. In terms of assembly, homotetramer.

It localises to the cytoplasm. The protein localises to the cytoskeleton. The protein resides in the microtubule organizing center. It is found in the centrosome. Minus-end microtubule-dependent motor protein. Acts as a negative regulator of centrosome separation required to prevent premature centrosome separation during interphase. Required to maintain a centered nucleus to ensure that the spindle is stably oriented at the onset of mitosis. May also act as a negative regulator of amino acid starvation-induced autophagy. This Macaca fascicularis (Crab-eating macaque) protein is Kinesin-like protein KIF25.